The following is an 89-amino-acid chain: Small ribosomal subunit protein uS19 (89 aa).

Belongs to the universal ribosomal protein uS19 family.

In terms of biological role, protein S19 forms a complex with S13 that binds strongly to the 16S ribosomal RNA. The polypeptide is Small ribosomal subunit protein uS19 (Xanthomonas campestris pv. campestris (strain 8004)).